The primary structure comprises 61 residues: Large ribosomal subunit protein bL32 (61 aa).

A compositionally biased stretch (basic residues) spans 1-16 (MPTPKKKTSRSKRDMR). The tract at residues 1–47 (MPTPKKKTSRSKRDMRRSHDGLTAPAIAVEKKTGELVRPHRAHKGAD) is disordered. Residues 29–38 (VEKKTGELVR) are compositionally biased toward basic and acidic residues.

This sequence belongs to the bacterial ribosomal protein bL32 family.

This is Large ribosomal subunit protein bL32 from Bdellovibrio bacteriovorus (strain ATCC 15356 / DSM 50701 / NCIMB 9529 / HD100).